Here is a 364-residue protein sequence, read N- to C-terminus: Deoxyribonuclease-2-alpha (364 aa).

The signal sequence occupies residues 1–21 (MATLSPLLLAALLWVPVGTLT). Cysteines 22 and 161 form a disulfide. 6 N-linked (GlcNAc...) asparagine glycosylation sites follow: Asn72, Asn88, Asn171, Asn214, Asn268, and Asn292. 2 cysteine pairs are disulfide-bonded: Cys269/Cys349 and Cys310/Cys329. His297 is an active-site residue.

It belongs to the DNase II family.

It is found in the lysosome. It catalyses the reaction Endonucleolytic cleavage to nucleoside 3'-phosphates and 3'-phosphooligonucleotide end-products.. Its function is as follows. Hydrolyzes DNA under acidic conditions with a preference for double-stranded DNA. Plays a major role in the clearance of nucleic acids generated through apoptosis, hence preventing autoinflammation. Necessary for proper fetal development and for definitive erythropoiesis in fetal liver and bone marrow, where it degrades nuclear DNA expelled from erythroid precursor cells. The chain is Deoxyribonuclease-2-alpha (DNASE2) from Sus scrofa (Pig).